The chain runs to 355 residues: uncharacterized protein (355 aa).

A signal peptide spans 1-27; it reads MESPIRTARRTLPLLIGATCLVLALTG. The N-palmitoyl cysteine moiety is linked to residue cysteine 28. A lipid anchor (S-diacylglycerol cysteine) is attached at cysteine 28. The interval 33–53 is disordered; the sequence is GPAQARPTPSASTSPKQAPAL. Residues 39 to 48 are compositionally biased toward polar residues; it reads PTPSASTSPK.

Its subcellular location is the cell membrane. This is an uncharacterized protein from Streptomyces coelicolor (strain ATCC BAA-471 / A3(2) / M145).